Here is a 218-residue protein sequence, read N- to C-terminus: Large ribosomal subunit protein uL3c (218 aa).

The disordered stretch occupies residues 127-161; the sequence is GFSRGPMTHGSKNHREPGSTGAGTTPGRIYPGKRM.

The protein belongs to the universal ribosomal protein uL3 family. Part of the 50S ribosomal subunit.

It localises to the plastid. The protein localises to the organellar chromatophore. One of the primary rRNA binding proteins, it binds directly near the 3'-end of the 23S rRNA, where it nucleates assembly of the 50S subunit. The protein is Large ribosomal subunit protein uL3c (rpl3) of Paulinella chromatophora.